Consider the following 367-residue polypeptide: 3-methyl-2-oxobutanoate dehydrogenase subunit alpha (367 aa).

Residues 99-101 (QYR), 141-142 (PI), 170-176 (GDGATSE), 200-204 (NQWAI), and histidine 269 contribute to the thiamine diphosphate site. Position 100 (tyrosine 100) interacts with substrate. Mg(2+)-binding residues include aspartate 171 and asparagine 200.

As to quaternary structure, heteromer of E1 alpha (BkdA) and beta (BkdB) subunits. Part of the BCKADH complex, consisting of multiple copies of BkdA/BkdB (E1), BkdC (E2) and Lpd (E3). It depends on Mg(2+) as a cofactor. Thiamine diphosphate serves as cofactor.

The catalysed reaction is N(6)-[(R)-lipoyl]-L-lysyl-[protein] + 3-methyl-2-oxobutanoate + H(+) = N(6)-[(R)-S(8)-2-methylpropanoyldihydrolipoyl]-L-lysyl-[protein] + CO2. Component of the branched-chain alpha-ketoacid dehydrogenase (BCKADH) complex, that catalyzes the overall conversion of branched-chain alpha-ketoacids to acyl-CoA and CO(2). This is 3-methyl-2-oxobutanoate dehydrogenase subunit alpha (bkdA) from Mycobacterium tuberculosis (strain CDC 1551 / Oshkosh).